A 329-amino-acid polypeptide reads, in one-letter code: Glycerol-3-phosphate dehydrogenase [NAD(P)+] (329 aa).

NADPH-binding residues include Trp11, Arg30, and Lys103. Residues Lys103, Gly132, and Ser134 each contribute to the sn-glycerol 3-phosphate site. Residue Ala136 coordinates NADPH. Sn-glycerol 3-phosphate is bound by residues Lys187, Asp240, Ser250, Arg251, and Asn252. The Proton acceptor role is filled by Lys187. Arg251 lines the NADPH pocket. The NADPH site is built by Val275 and Glu277.

Belongs to the NAD-dependent glycerol-3-phosphate dehydrogenase family.

Its subcellular location is the cytoplasm. It catalyses the reaction sn-glycerol 3-phosphate + NAD(+) = dihydroxyacetone phosphate + NADH + H(+). The enzyme catalyses sn-glycerol 3-phosphate + NADP(+) = dihydroxyacetone phosphate + NADPH + H(+). It functions in the pathway membrane lipid metabolism; glycerophospholipid metabolism. Its function is as follows. Catalyzes the reduction of the glycolytic intermediate dihydroxyacetone phosphate (DHAP) to sn-glycerol 3-phosphate (G3P), the key precursor for phospholipid synthesis. The sequence is that of Glycerol-3-phosphate dehydrogenase [NAD(P)+] from Nitrosomonas eutropha (strain DSM 101675 / C91 / Nm57).